The sequence spans 56 residues: Small ribosomal subunit protein bS21 (56 aa).

This sequence belongs to the bacterial ribosomal protein bS21 family.

This is Small ribosomal subunit protein bS21 from Synechococcus sp. (strain WH7803).